Here is a 201-residue protein sequence, read N- to C-terminus: Mediator of RNA polymerase II transcription subunit 22 (201 aa).

A coiled-coil region spans residues 93–123 (SVNEAIDQRNQQLRALQEECDRKLIALRDEV). A disordered region spans residues 166–201 (LSAPLLASPEPSAGGPLQAAAPTHSHAGGPGPTEHA).

In terms of assembly, component of the Mediator complex, which is composed of MED1, MED4, MED6, MED7, MED8, MED9, MED10, MED11, MED12, MED13, MED13L, MED14, MED15, MED16, MED17, MED18, MED19, MED20, MED21, MED22, MED23, MED24, MED25, MED26, MED27, MED29, MED30, MED31, CCNC, CDK8 and CDC2L6/CDK11. The MED12, MED13, CCNC and CDK8 subunits form a distinct module termed the CDK8 module. Mediator containing the CDK8 module is less active than Mediator lacking this module in supporting transcriptional activation. Individual preparations of the Mediator complex lacking one or more distinct subunits have been variously termed ARC, CRSP, DRIP, PC2, SMCC and TRAP.

The protein localises to the nucleus. Its function is as follows. Component of the Mediator complex, a coactivator involved in the regulated transcription of nearly all RNA polymerase II-dependent genes. Mediator functions as a bridge to convey information from gene-specific regulatory proteins to the basal RNA polymerase II transcription machinery. Mediator is recruited to promoters by direct interactions with regulatory proteins and serves as a scaffold for the assembly of a functional preinitiation complex with RNA polymerase II and the general transcription factors. In Bos taurus (Bovine), this protein is Mediator of RNA polymerase II transcription subunit 22 (MED22).